Consider the following 768-residue polypeptide: Envelope glycoprotein gp160 (768 aa).

The N-terminal stretch at 1-16 (MTKFLGIFIVLGIGIG) is a signal peptide. Residues 17–701 (IGISTKQQWI…SWFDFSKWLN (685 aa)) are Extracellular-facing. An N-linked (GlcNAc...) asparagine; by host glycan is attached at asparagine 37. Residues cysteine 44 and cysteine 57 are joined by a disulfide bond. N-linked (GlcNAc...) asparagine; by host glycans are attached at residues asparagine 70, asparagine 141, asparagine 151, asparagine 166, asparagine 181, asparagine 200, and asparagine 211. Intrachain disulfides connect cysteine 103-cysteine 219, cysteine 110-cysteine 210, cysteine 115-cysteine 167, cysteine 232-cysteine 262, and cysteine 242-cysteine 254. Residues 115-166 (CVELKGSATSTPATSTTAGTKLPCVRNKTDSNLQSCNDTIIEKEMNDEAASN) form a V1 region. The interval 167-210 (CTFAMAGYIRDQKKNYSVVWNDAEIFCKRSTSHNGTKECYMIHC) is V2. 11 N-linked (GlcNAc...) asparagine; by host glycosylation sites follow: asparagine 256, asparagine 267, asparagine 277, asparagine 283, asparagine 295, asparagine 307, asparagine 317, asparagine 374, asparagine 415, asparagine 490, and asparagine 493. A V3 region spans residues 312–344 (CKRPGNKTVLPVTIMAGLVFHSQKYNTRLRQAW). A disulfide bond links cysteine 312 and cysteine 345. 2 cysteine pairs are disulfide-bonded: cysteine 397/cysteine 473 and cysteine 404/cysteine 446. The segment at 404–446 (CKMDWFLNYLNNLTVDADHNHCKNNAGKGRSPGPCVQRTYVAC) is V4. The segment at 489 to 496 (QNRTNVTL) is V5. The tract at residues 539–559 (VPFVLGFLGFLGAAGTAMGAA) is fusion peptide. The tract at residues 602 to 618 (LNARVTALEKYLADQAR) is immunosuppression. Residues asparagine 646 and asparagine 662 are each glycosylated (N-linked (GlcNAc...) asparagine; by host). The stretch at 650–687 (LEWEKQIEGLEGNITKQLEQAREQEEKNLDAYQKLSDW) forms a coiled coil. The segment at 683 to 704 (KLSDWSSFWSWFDFSKWLNILK) is MPER; binding to GalCer. A helical membrane pass occupies residues 702 to 722 (ILKIGFLAVIGVIGLRLLYTL). Residues 723–768 (YTCIARVRQGYSPLSPQIHIHPWKGQPDNAGEPEEGGRTGKSKSTH) lie on the Cytoplasmic side of the membrane. A YXXL motif; contains endocytosis signal motif is present at residues 733–736 (YSPL). The interval 744 to 768 (PWKGQPDNAGEPEEGGRTGKSKSTH) is disordered.

The mature envelope protein (Env) consists of a homotrimer of non-covalently associated gp120-gp41 heterodimers. The resulting complex protrudes from the virus surface as a spike. Interacts with host CD4 and CCR5. Gp120 also interacts with the C-type lectins CD209/DC-SIGN and CLEC4M/DC-SIGNR (collectively referred to as DC-SIGN(R)). In terms of assembly, the mature envelope protein (Env) consists of a homotrimer of non-covalently associated gp120-gp41 heterodimers. The resulting complex protrudes from the virus surface as a spike. Post-translationally, specific enzymatic cleavages in vivo yield mature proteins. Envelope glycoproteins are synthesized as an inactive precursor that is heavily N-glycosylated and processed likely by host cell furin in the Golgi to yield the mature SU and TM proteins. The cleavage site between SU and TM requires the minimal sequence [KR]-X-[KR]-R.

It is found in the virion membrane. The protein resides in the host cell membrane. The protein localises to the host endosome membrane. In terms of biological role, the surface protein gp120 (SU) attaches the virus to the host lymphoid cell by binding to the primary receptor CD4. This interaction induces a structural rearrangement creating a high affinity binding site for a chemokine coreceptor like CCR5. This peculiar 2 stage receptor-interaction strategy allows gp120 to maintain the highly conserved coreceptor-binding site in a cryptic conformation, protected from neutralizing antibodies. These changes are transmitted to the transmembrane protein gp41 and are thought to activate its fusogenic potential by unmasking its fusion peptide. Its function is as follows. Surface protein gp120 (SU) may target the virus to gut-associated lymphoid tissue (GALT) by binding host ITGA4/ITGB7 (alpha-4/beta-7 integrins), a complex that mediates T-cell migration to the GALT. Interaction between gp120 and ITGA4/ITGB7 would allow the virus to enter GALT early in the infection, infecting and killing most of GALT's resting CD4+ T-cells. This T-cell depletion is believed to be the major insult to the host immune system leading to AIDS. Functionally, the surface protein gp120 is a ligand for CD209/DC-SIGN and CLEC4M/DC-SIGNR, which are respectively found on dendritic cells (DCs), and on endothelial cells of liver sinusoids and lymph node sinuses. These interactions allow capture of viral particles at mucosal surfaces by these cells and subsequent transmission to permissive cells. DCs are professional antigen presenting cells, critical for host immunity by inducing specific immune responses against a broad variety of pathogens. They act as sentinels in various tissues where they take up antigen, process it, and present it to T-cells following migration to lymphoid organs. SIV subverts the migration properties of dendritic cells to gain access to CD4+ T-cells in lymph nodes. Virus transmission to permissive T-cells occurs either in trans (without DCs infection, through viral capture and transmission), or in cis (following DCs productive infection, through the usual CD4-gp120 interaction), thereby inducing a robust infection. In trans infection, bound virions remain infectious over days and it is proposed that they are not degraded, but protected in non-lysosomal acidic organelles within the DCs close to the cell membrane thus contributing to the viral infectious potential during DCs' migration from the periphery to the lymphoid tissues. On arrival at lymphoid tissues, intact virions recycle back to DCs' cell surface allowing virus transmission to CD4+ T-cells. Virion capture also seems to lead to MHC-II-restricted viral antigen presentation, and probably to the activation of SIV-specific CD4+ cells. The transmembrane protein gp41 (TM) acts as a class I viral fusion protein. Under the current model, the protein has at least 3 conformational states: pre-fusion native state, pre-hairpin intermediate state, and post-fusion hairpin state. During fusion of viral and target intracellular membranes, the coiled coil regions (heptad repeats) assume a trimer-of-hairpins structure, positioning the fusion peptide in close proximity to the C-terminal region of the ectodomain. The formation of this structure appears to drive apposition and subsequent fusion of viral and target cell membranes. Complete fusion occurs in host cell endosomes. The virus undergoes clathrin-dependent internalization long before endosomal fusion, thus minimizing the surface exposure of conserved viral epitopes during fusion and reducing the efficacy of inhibitors targeting these epitopes. Membranes fusion leads to delivery of the nucleocapsid into the cytoplasm. In terms of biological role, the envelope glycoprotein gp160 precursor down-modulates cell surface CD4 antigen by interacting with it in the endoplasmic reticulum and blocking its transport to the cell surface. Its function is as follows. The gp120-gp41 heterodimer allows rapid transcytosis of the virus through CD4 negative cells such as simple epithelial monolayers of the intestinal, rectal and endocervical epithelial barriers. Both gp120 and gp41 specifically recognize glycosphingolipids galactosyl-ceramide (GalCer) or 3' sulfo-galactosyl-ceramide (GalS) present in the lipid rafts structures of epithelial cells. Binding to these alternative receptors allows the rapid transcytosis of the virus through the epithelial cells. This transcytotic vesicle-mediated transport of virions from the apical side to the basolateral side of the epithelial cells does not involve infection of the cells themselves. This Simian immunodeficiency virus agm.vervet (isolate AGM155) (SIV-agm.ver) protein is Envelope glycoprotein gp160 (env).